Reading from the N-terminus, the 118-residue chain is SPbeta prophage-derived uncharacterized protein YoqR (118 aa).

This is SPbeta prophage-derived uncharacterized protein YoqR (yoqR) from Bacillus subtilis (strain 168).